Consider the following 119-residue polypeptide: Large ribosomal subunit protein uL18 (119 aa).

It belongs to the universal ribosomal protein uL18 family. Part of the 50S ribosomal subunit; part of the 5S rRNA/L5/L18/L25 subcomplex. Contacts the 5S and 23S rRNAs.

In terms of biological role, this is one of the proteins that bind and probably mediate the attachment of the 5S RNA into the large ribosomal subunit, where it forms part of the central protuberance. The sequence is that of Large ribosomal subunit protein uL18 from Borrelia recurrentis (strain A1).